Reading from the N-terminus, the 152-residue chain is Ribosome maturation factor RimP (152 aa).

It belongs to the RimP family.

The protein localises to the cytoplasm. In terms of biological role, required for maturation of 30S ribosomal subunits. This chain is Ribosome maturation factor RimP, found in Desulfatibacillum aliphaticivorans.